Here is a 340-residue protein sequence, read N- to C-terminus: tRNA N6-adenosine threonylcarbamoyltransferase (340 aa).

The Fe cation site is built by His113 and His117. Substrate contacts are provided by residues 135–139 (LVSGG), Asp169, Gly182, Asp186, and Asn274. Position 302 (Asp302) interacts with Fe cation.

This sequence belongs to the KAE1 / TsaD family. It depends on Fe(2+) as a cofactor.

Its subcellular location is the cytoplasm. It carries out the reaction L-threonylcarbamoyladenylate + adenosine(37) in tRNA = N(6)-L-threonylcarbamoyladenosine(37) in tRNA + AMP + H(+). Functionally, required for the formation of a threonylcarbamoyl group on adenosine at position 37 (t(6)A37) in tRNAs that read codons beginning with adenine. Is involved in the transfer of the threonylcarbamoyl moiety of threonylcarbamoyl-AMP (TC-AMP) to the N6 group of A37, together with TsaE and TsaB. TsaD likely plays a direct catalytic role in this reaction. The sequence is that of tRNA N6-adenosine threonylcarbamoyltransferase from Mycolicibacterium vanbaalenii (strain DSM 7251 / JCM 13017 / BCRC 16820 / KCTC 9966 / NRRL B-24157 / PYR-1) (Mycobacterium vanbaalenii).